The primary structure comprises 375 residues: tRNA-specific 2-thiouridylase MnmA (375 aa).

ATP-binding positions include 16-23 (GMSGGVDS) and methionine 42. An interaction with target base in tRNA region spans residues 102-104 (NPD). The Nucleophile role is filled by cysteine 107. Cysteine 107 and cysteine 203 are disulfide-bonded. Glycine 131 contributes to the ATP binding site. Residues 153-155 (KDQ) form an interaction with tRNA region. Cysteine 203 acts as the Cysteine persulfide intermediate in catalysis. The interaction with tRNA stretch occupies residues 315 to 316 (RY).

It belongs to the MnmA/TRMU family.

Its subcellular location is the cytoplasm. It carries out the reaction S-sulfanyl-L-cysteinyl-[protein] + uridine(34) in tRNA + AH2 + ATP = 2-thiouridine(34) in tRNA + L-cysteinyl-[protein] + A + AMP + diphosphate + H(+). Catalyzes the 2-thiolation of uridine at the wobble position (U34) of tRNA, leading to the formation of s(2)U34. The chain is tRNA-specific 2-thiouridylase MnmA from Pseudomonas aeruginosa (strain UCBPP-PA14).